A 551-amino-acid polypeptide reads, in one-letter code: Glucans biosynthesis protein D (551 aa).

Positions 1-32 (MNRRRFIKGSMAMAAVCGSSGIASLFSQAAFA) form a signal peptide, tat-type signal.

Belongs to the OpgD/OpgG family. Predicted to be exported by the Tat system. The position of the signal peptide cleavage has not been experimentally proven.

Its subcellular location is the periplasm. The protein operates within glycan metabolism; osmoregulated periplasmic glucan (OPG) biosynthesis. Probably involved in the control of the structural glucose backbone of osmoregulated periplasmic glucans (OPGs). The protein is Glucans biosynthesis protein D (mdoD) of Salmonella typhimurium (strain LT2 / SGSC1412 / ATCC 700720).